The chain runs to 678 residues: Mitogen-activated protein kinase kinase kinase 7 (678 aa).

The Protein kinase domain maps to 19–271 (ITLREKVGHG…YIVGVMHEIV (253 aa)). Residues 25–33 (VGHGSYGVV) and Lys-46 each bind ATP. Residue Asp-140 is the Proton acceptor of the active site. 4 disordered regions span residues 296-322 (DGTVAAQPDSLSSQEGELSPSSTQLTP), 339-365 (TTSSMTENTSSTSSDITPTNSGQLDNN), 431-455 (DLSPSESSSSSTNAKSDGRERLTVT), and 616-647 (QLAAGHHPQPHPHPHPNQLQHPHSHPPMHFLQ). Low complexity-rich tracts occupy residues 313–322 (LSPSSTQLTP) and 339–352 (TTSSMTENTSSTSS). Polar residues predominate over residues 353-364 (DITPTNSGQLDN).

It belongs to the protein kinase superfamily. STE Ser/Thr protein kinase family. MAP kinase kinase kinase subfamily. It depends on Mg(2+) as a cofactor.

It carries out the reaction L-seryl-[protein] + ATP = O-phospho-L-seryl-[protein] + ADP + H(+). The enzyme catalyses L-threonyl-[protein] + ATP = O-phospho-L-threonyl-[protein] + ADP + H(+). In terms of biological role, component of a protein kinase signal transduction cascade. Mediator of TGF-beta signal transduction. Responsible for activation of the JNK MAPK pathway (basket, bsk and hemipterous, hep) in response to LPS. Component of the NF-kappa-B pathway; relish-mediated JNK inhibition involves proteasomal degradation of Tak1; certain targets of Relish that are induced during immune responses may facilitate destruction of Tak1 and switch off the JNK cascade. Participates in diverse roles such as control of cell shape and regulation of apoptosis. This Drosophila melanogaster (Fruit fly) protein is Mitogen-activated protein kinase kinase kinase 7 (Tak1).